The following is a 402-amino-acid chain: MESRGPLATSRLLLLLLLLLLRHTRQGWALRPVLPTQSAHDPPAVHLSNGPGQEPIAVMTFDLTKITKTSSSFEVRTWDPEGVIFYGDTNPKDDWFMLGLRDGRPEIQLHNHWAQLTVGAGPRLDDGRWHQVEVKMEGDSVLLEVDGEEVLRLRQVSGPLTSKRHPIMRIALGGLLFPASNLRLPLVPALDGCLRRDSWLDKQAEISASAPTSLRSCDVESNPGIFLPPGTQAEFNLRDIPQPHAEPWAFSLDLGLKQAAGSGHLLALGTPENPSWLSLHLQDQKVVLSSGSGPGLDLPLVLGLPLQLKLSMSRVVLSQGSKMKALALPPLGLAPLLNLWAKPQGRLFLGALPGEDSSTSFCLNGLWAQGQRLDVDQALNRSHEIWTHSCPQSPGNGTDASH.

A signal peptide spans 1–29 (MESRGPLATSRLLLLLLLLLLRHTRQGWA). O-linked (GalNAc...) threonine glycosylation is present at threonine 36. Laminin G-like domains follow at residues 45–217 (VHLS…LRSC) and 224–390 (GIFL…THSC). 2 disulfides stabilise this stretch: cysteine 193/cysteine 217 and cysteine 362/cysteine 390. Residues asparagine 380 and asparagine 396 are each glycosylated (N-linked (GlcNAc...) asparagine).

As to quaternary structure, homodimer. Variant Asn-356 contains one N-linked (GlcNAc...) at position 356. As to expression, isoform 1 and isoform 2 are present in liver and testis.

It is found in the secreted. Its function is as follows. Functions as an androgen transport protein, but may also be involved in receptor mediated processes. Each dimer binds one molecule of steroid. Specific for 5-alpha-dihydrotestosterone, testosterone, and 17-beta-estradiol. Regulates the plasma metabolic clearance rate of steroid hormones by controlling their plasma concentration. In Homo sapiens (Human), this protein is Sex hormone-binding globulin.